The primary structure comprises 146 residues: Deoxyuridine 5'-triphosphate nucleotidohydrolase (146 aa).

Residues 65–67 (RSG), N78, and 82–84 (TID) contribute to the substrate site.

The protein belongs to the dUTPase family. The cofactor is Mg(2+).

It catalyses the reaction dUTP + H2O = dUMP + diphosphate + H(+). The protein operates within pyrimidine metabolism; dUMP biosynthesis; dUMP from dCTP (dUTP route): step 2/2. Its function is as follows. This enzyme is involved in nucleotide metabolism: it produces dUMP, the immediate precursor of thymidine nucleotides and it decreases the intracellular concentration of dUTP so that uracil cannot be incorporated into DNA. This is Deoxyuridine 5'-triphosphate nucleotidohydrolase from Treponema pallidum subsp. pallidum (strain SS14).